Reading from the N-terminus, the 488-residue chain is Intron-encoded DNA endonuclease I-AniI (488 aa).

Residues 1 to 169 (MRILKSHPLL…DIVEFIWGGL (169 aa)) are cobA exon 1 encoded. The cobA intron encoded stretch occupies residues 170–488 (YTDEPQCGDV…SEKIKIPSNY (319 aa)).

In the C-terminal section; belongs to the LAGLIDADG endonuclease family. As to quaternary structure, homodimer. The cofactor is Mg(2+). The mature protein may arise from proteolytic cleavage of an in-frame translation of cobA exon 1 plus intron, containing the I-AniI open reading frame. Cleavage may take place close to Met-213 resulting in an active endonuclease/maturase of about 30 kDa.

It localises to the mitochondrion. Mitochondrial DNA endonuclease and mRNA maturase involved in intron homing and required for splicing of the cytochrome b (cobA) gene intron, containing its own coding sequence. The protein stimulates the intrinsic ribozyme activity of the intron through binding to and stabilizing specific secondary and tertiary structure elements in the RNA. As an endonuclease it introduces a specific double-strand break at the junction of the two exons the cobA gene and thus mediates the insertion of an intron, containing its own coding sequence (group I intron), into an intronless gene. Recognizes with limited specificity and cleaves the sequence 5'-GAGGAGGTTTCTCTGTA-3'. The proteins RNA and DNA recognition and binding surfaces are independent. The polypeptide is Intron-encoded DNA endonuclease I-AniI (I-AniI) (Emericella nidulans (Aspergillus nidulans)).